We begin with the raw amino-acid sequence, 338 residues long: Probable protein S-acyltransferase 1 (338 aa).

2 consecutive transmembrane segments (helical) span residues Asp-32–Ile-52 and Leu-68–Ser-88. Residues Lys-142–Ser-192 form the DHHC domain. The S-palmitoyl cysteine intermediate role is filled by Cys-172. 2 helical membrane passes run Phe-186 to Trp-206 and Ile-225 to Val-245. Residues Phe-319–Arg-338 are disordered. A compositionally biased stretch (basic and acidic residues) spans Gly-320–Arg-338.

It belongs to the DHHC palmitoyltransferase family.

Its subcellular location is the endosome membrane. It carries out the reaction L-cysteinyl-[protein] + hexadecanoyl-CoA = S-hexadecanoyl-L-cysteinyl-[protein] + CoA. In terms of biological role, palmitoyl acyltransferase. The polypeptide is Probable protein S-acyltransferase 1 (PAT01) (Arabidopsis thaliana (Mouse-ear cress)).